Reading from the N-terminus, the 300-residue chain is MATVVYQSYFESQHFEPRALRLRLSSHTNPQLSTPLKSHFQNSSIAPQDNPITINAASLPSSSPNPSSNSDTNSGSWSFLESLSNSSSNDKEKKTLPLFQSPSSRRTLSDESLALCTESLGSETGSDIIHEDMFSISSELQTMETRTTSTTSNPSRQDRKRNTMASLPPPLTSMIGFDCIEVKSHRENGRLVMMATRPPPRNRCLQDRSNGCVRLAILIDSDDHIETETKEEKEEEEEETIETVRDNEEEIPEYKEEEEEKEEEIKVKGVEKVQRSRRCIEGDRENRGFLNWESLCVATS.

The span at 30–56 (PQLSTPLKSHFQNSSIAPQDNPITINA) shows a compositional bias: polar residues. Disordered stretches follow at residues 30–104 (PQLS…SPSS), 142–170 (TMETRTTSTTSNPSRQDRKRNTMASLPPP), and 227–264 (TETKEEKEEEEEETIETVRDNEEEIPEYKEEEEEKEEE). Low complexity-rich tracts occupy residues 58 to 88 (SLPSSSPNPSSNSDTNSGSWSFLESLSNSSS) and 142 to 151 (TMETRTTSTT). Positions 166-217 (SLPPPLTSMIGFDCIEVKSHRENGRLVMMATRPPPRNRCLQDRSNGCVRLAI) constitute an FAF domain. A compositionally biased stretch (acidic residues) spans 233-262 (KEEEEEETIETVRDNEEEIPEYKEEEEEKE).

Belongs to the fantastic four family. As to expression, expressed in the shoot apex and young siliques. Detected in provascular and vascular tissue, but not in the vegetative meristem. In inflorescences, restricted to the base of the flower and to the vasculature of the stem and the pedicels, but absent from young flowers. Detected in the center of the inflorescence meristem.

Regulates the size of the shoot meristem by modulating the CLV3-WUS feedback loop. Can repress WUS but is under negative control by CLV3. The polypeptide is Protein FANTASTIC FOUR 4 (FAF4) (Arabidopsis thaliana (Mouse-ear cress)).